A 367-amino-acid polypeptide reads, in one-letter code: Peptide chain release factor 1 (367 aa).

Glutamine 243 bears the N5-methylglutamine mark.

Belongs to the prokaryotic/mitochondrial release factor family. Post-translationally, methylated by PrmC. Methylation increases the termination efficiency of RF1.

It is found in the cytoplasm. Peptide chain release factor 1 directs the termination of translation in response to the peptide chain termination codons UAG and UAA. The polypeptide is Peptide chain release factor 1 (Acidovorax ebreus (strain TPSY) (Diaphorobacter sp. (strain TPSY))).